We begin with the raw amino-acid sequence, 400 residues long: MSQLFSHKIAPSPIPDNISVVDLIDNYFTAYNSARLREICHLLAQKVMQPGVTVGLSLSGAMTPTGLGISALAPLVRAGLIDYIISTGANLYHDLHYALGMDLYASHPFVDDVKLRQESRIRIYDIIFDYDVLLETDAFIREVLRAEPFQRRMGTAEFHHLLGQYARAAEVELGRSHSSLLATAYECGVPIYTSSPGDSSIGMNVAALALEGSQLVLDPALDVNETAAIAYFARESDIPDQEGKSAALIIGGGSPKNFLLQTQPQIHEVLGLEERGHDYFIQITDARPDTGGLSGAVPSEAVSWGKVDPNGLRDTVVCYTDSTIALPILTAYVLNQCAPRPLKRLYDRRPAMIEELQRLYLQAQFKQQAEAKLGKEQMPEPQSTEPVATYPCGTPIKGRK.

A disordered region spans residues 372–400 (KLGKEQMPEPQSTEPVATYPCGTPIKGRK).

It belongs to the deoxyhypusine synthase family.

This chain is Deoxyhypusine synthase-like protein, found in Cyanothece sp. (strain PCC 7425 / ATCC 29141).